A 689-amino-acid polypeptide reads, in one-letter code: UvrABC system protein C (689 aa).

A GIY-YIG domain is found at 16 to 95 (TNPGVYRFRD…IKEFAPRFNI (80 aa)). Residues 208 to 243 (KPYIRELTRQMNEAAECMDFETAAARRDDVGALERV) enclose the UVR domain. A disordered region spans residues 316–337 (LAPAASGRRRTARHGSEDVVGQ).

This sequence belongs to the UvrC family. As to quaternary structure, interacts with UvrB in an incision complex.

It is found in the cytoplasm. Its function is as follows. The UvrABC repair system catalyzes the recognition and processing of DNA lesions. UvrC both incises the 5' and 3' sides of the lesion. The N-terminal half is responsible for the 3' incision and the C-terminal half is responsible for the 5' incision. The sequence is that of UvrABC system protein C from Kocuria rhizophila (strain ATCC 9341 / DSM 348 / NBRC 103217 / DC2201).